A 386-amino-acid chain; its full sequence is 2-deoxy-scyllo-inosose synthase (386 aa).

Residues Asp-42, 73 to 76, 105 to 109, 129 to 130, 140 to 142, and 151 to 152 contribute to the NAD(+) site; these read EVHK, GITGN, TT, SLK, and KN. Lys-142 is an active-site residue. Position 184 (Glu-184) interacts with Co(2+). Residue Glu-244 is part of the active site. His-247 and His-263 together coordinate Co(2+).

This sequence belongs to the sugar phosphate cyclases superfamily. DOI synthase family. It depends on NAD(+) as a cofactor. Co(2+) serves as cofactor.

The catalysed reaction is D-glucose 6-phosphate = 2-deoxy-L-scyllo-inosose + phosphate. It functions in the pathway metabolic intermediate biosynthesis; 2-deoxystreptamine biosynthesis; 2-deoxystreptamine from D-glucose 6-phosphate: step 1/4. It participates in antibiotic biosynthesis; paromomycin biosynthesis. In terms of biological role, catalyzes the intramolecular carbocycle formation from D-glucose-6-phosphate to 2-deoxy-scyllo-inosose (DOI). This chain is 2-deoxy-scyllo-inosose synthase (parC), found in Streptomyces paromomycinus (Streptomyces rimosus subsp. paromomycinus).